The primary structure comprises 558 residues: Zeta-carotene desaturase, chloroplastic/chromoplastic (558 aa).

The N-terminal 27 residues, 1 to 27, are a transit peptide targeting the chloroplast and chromoplast; the sequence is MASSVVFAATGSLSVPPLKSRRFYVNS.

This sequence belongs to the zeta carotene desaturase family. Decylplastoquinone is required as a cofactor. Requires 6-decylubiquinone as cofactor. As to expression, highly expressed in leaves. Expressed at low levels in flowers and siliques.

The protein localises to the plastid. It localises to the chloroplast. It is found in the chromoplast. It carries out the reaction 9,9'-di-cis-zeta-carotene + 2 a quinone = 7,7',9,9'-tetra-cis-lycopene + 2 a quinol. Its pathway is carotenoid biosynthesis; lycopene biosynthesis. Plays a crucial role in plant growth and development. Is essential for the biosynthesis of carotenoids. Carotenoids are involved in different physiological processes, including coloration, photoprotection, biosynthesis of abscisic acid (ABA) and chloroplast biogenesis. Catalyzes the conversion of zeta-carotene to lycopene via the intermediary of neurosporene. It carries out two consecutive desaturations (introduction of double bonds) at positions C-7 and C-7'. Shows stereoselectivity toward trans C15-C15'zeta-carotene double bond. The zeta-carotene produced by the phytoene desaturase PDS has a C15-C15' double bond in the cis configuration and it requires isomerization before being recognized as substrate by ZDS. The main product is 7,9,7',9'-tetra-cis-lycopene (pro-lycopene). The polypeptide is Zeta-carotene desaturase, chloroplastic/chromoplastic (Arabidopsis thaliana (Mouse-ear cress)).